Here is a 349-residue protein sequence, read N- to C-terminus: Cytokine response-modifying protein B (349 aa).

Residues 1–22 form the signal peptide; that stretch reads MKSVLYLYILFLSCIIINGRDA. The interval 1–160 is TNF-binding; sequence MKSVLYLYIL…SPCGFGTYSH (160 aa). TNFR-Cys repeat units lie at residues 31–66 and 67–108; these read KCKD…TQCT and PCGS…NRIC. 6 disulfides stabilise this stretch: cysteine 32–cysteine 43, cysteine 44–cysteine 57, cysteine 47–cysteine 65, cysteine 68–cysteine 83, cysteine 86–cysteine 100, and cysteine 90–cysteine 108. Residues asparagine 101, asparagine 173, asparagine 189, asparagine 215, and asparagine 248 are each glycosylated (N-linked (GlcNAc...) asparagine; by host). Residues 161–349 form a chemokine-binding region; that stretch reads TVSSADKCEP…ITNSKPTRFL (189 aa).

The protein belongs to the orthopoxvirus OPG002 family. Homodimer. Interacts with host TNF, LTA, CCL28, CCL25, CXCL12, CXCL13 and CXCl14.

Its subcellular location is the secreted. Its function is as follows. Inhibits host immune defense by binding to host TNF and various chemokines in the extracellular space. Binds host CC chemokines (beta chemokines) and CXC chemokines (alpha chemokines). The polypeptide is Cytokine response-modifying protein B (OPG002) (Variola virus (isolate Human/India/Ind3/1967) (VARV)).